Here is a 506-residue protein sequence, read N- to C-terminus: Parthenolide synthase (506 aa).

The chain crosses the membrane as a helical span at residues 10-30; sequence LFLPTLCTILISYIIIKYVLI. N-linked (GlcNAc...) asparagine glycans are attached at residues asparagine 32, asparagine 63, asparagine 121, asparagine 168, and asparagine 175. The helical transmembrane segment at 301 to 321 threads the bilayer; it reads LLLNVLLGAIDTTFTTIVWAM. A heme-binding site is contributed by cysteine 448.

The protein belongs to the cytochrome P450 family.

The protein resides in the membrane. The enzyme catalyses (+)-costunolide + reduced [NADPH--hemoprotein reductase] + O2 = parthenolide + oxidized [NADPH--hemoprotein reductase] + H2O + H(+). It functions in the pathway secondary metabolite biosynthesis; terpenoid biosynthesis. Involved in the biosynthesis of germacrene-derived sesquiterpene lactones. Component of the parthenolide biosynthetic pathway; parthenolide and conjugates are promising anti-cancer drugs highly active against colon cancer cells. Catalyzes the conversion of costunolide to parthenolide. The polypeptide is Parthenolide synthase (Tanacetum parthenium (Feverfew)).